Here is a 667-residue protein sequence, read N- to C-terminus: Protein OS-9 (667 aa).

The signal sequence occupies residues 1-25; the sequence is MAAETLLSSLLGLLLLGLLLPATLT. Positions 108–230 constitute an MRH domain; it reads APCLLKTKDW…TIRTPRLCPH (123 aa). A disulfide bond links Cys-110 and Cys-123. A mannooligosaccharide derivative-binding residues include Trp-117, Trp-118, and Gln-130. Asn-177 carries an N-linked (GlcNAc...) asparagine glycan. Cystine bridges form between Cys-181–Cys-216 and Cys-196–Cys-228. 4 residues coordinate a mannooligosaccharide derivative: Asp-182, Arg-188, Glu-212, and Tyr-218. Disordered stretches follow at residues 262–450, 506–541, and 636–667; these read QADS…SDRE, EKQSPELMKKHRKRRVVPKKPPPSPQSTEEDPEHRV, and ERQRQKELESNYRRVWGSPGGEGTGDLDEFDF. Composition is skewed to basic and acidic residues over residues 263–279, 304–328, and 396–408; these read ADSKQYGDRAIEGRQDP, ENSKESDFWKMLHEPEEQPPEKEET, and PSREPEMKEKGDP. The span at 410 to 429 shows a compositional bias: acidic residues; that stretch reads QQNEVEEEEDDEDEDEDEDE. Over residues 430 to 450 the composition is skewed to basic and acidic residues; that stretch reads RQLLGEFEKELEGILLPSDRE. The span at 514 to 523 shows a compositional bias: basic residues; it reads KKHRKRRVVP. A compositionally biased stretch (basic and acidic residues) spans 636–647; that stretch reads ERQRQKELESNY.

This sequence belongs to the OS-9 family. Component of the HRD1 complex, which comprises at least SYNV1/HRD1, DERL1/2, FAM8A1, HERPUD1/HERP, OS9, SEL1L and UBE2J1. FAM8A1 is stabilized by interaction with SYNV1, which prevents its proteasomal degradation. OS9 and UBE2J1 recruitment to the complex may be mediated by SEL1L. Through this complex, may interact with ERLEC1 and HSPA5. Interacts (via C-terminus) with CPNE6 (via second C2 domain); this interaction occurs in a calcium-dependent manner in vitro. Interacts with CREB3. In terms of processing, intramolecular disulfide bonds.

Its subcellular location is the endoplasmic reticulum lumen. Functionally, lectin component of the HRD1 complex, which functions in endoplasmic reticulum (ER) quality control and ER-associated degradation (ERAD). Specifically recognizes and binds improperly folded glycoproteins as well as hyperglycosylated proteins, retain them in the ER, and transfers them to the ubiquitination machinery and promote their degradation. Possible targets include TRPV4 as well as hyperglycosylated HSP90B1. The chain is Protein OS-9 (OS9) from Bos taurus (Bovine).